The chain runs to 184 residues: Photosystem I assembly protein Ycf4 (184 aa).

Transmembrane regions (helical) follow at residues 22 to 42 (FCWAFILFLGSLGFLLVGTSS) and 57 to 77 (IIFFPQGIVMSFYGIAGLFIS).

Belongs to the Ycf4 family.

The protein resides in the plastid. Its subcellular location is the chloroplast thylakoid membrane. Its function is as follows. Seems to be required for the assembly of the photosystem I complex. The polypeptide is Photosystem I assembly protein Ycf4 (Olimarabidopsis pumila (Dwarf rocket)).